Reading from the N-terminus, the 157-residue chain is Small ribosomal subunit protein uS7 (157 aa).

This sequence belongs to the universal ribosomal protein uS7 family. Part of the 30S ribosomal subunit. Contacts proteins S9 and S11.

Functionally, one of the primary rRNA binding proteins, it binds directly to 16S rRNA where it nucleates assembly of the head domain of the 30S subunit. Is located at the subunit interface close to the decoding center, probably blocks exit of the E-site tRNA. This chain is Small ribosomal subunit protein uS7, found in Herpetosiphon aurantiacus (strain ATCC 23779 / DSM 785 / 114-95).